Consider the following 419-residue polypeptide: Arginine biosynthesis bifunctional protein ArgJ (419 aa).

The substrate site is built by threonine 154, lysine 180, threonine 191, glutamate 277, asparagine 414, and threonine 419. Threonine 191 serves as the catalytic Nucleophile.

Belongs to the ArgJ family. Heterotetramer of two alpha and two beta chains.

The protein localises to the cytoplasm. The enzyme catalyses N(2)-acetyl-L-ornithine + L-glutamate = N-acetyl-L-glutamate + L-ornithine. It catalyses the reaction L-glutamate + acetyl-CoA = N-acetyl-L-glutamate + CoA + H(+). Its pathway is amino-acid biosynthesis; L-arginine biosynthesis; L-ornithine and N-acetyl-L-glutamate from L-glutamate and N(2)-acetyl-L-ornithine (cyclic): step 1/1. It functions in the pathway amino-acid biosynthesis; L-arginine biosynthesis; N(2)-acetyl-L-ornithine from L-glutamate: step 1/4. Catalyzes two activities which are involved in the cyclic version of arginine biosynthesis: the synthesis of N-acetylglutamate from glutamate and acetyl-CoA as the acetyl donor, and of ornithine by transacetylation between N(2)-acetylornithine and glutamate. The polypeptide is Arginine biosynthesis bifunctional protein ArgJ (Thermosynechococcus vestitus (strain NIES-2133 / IAM M-273 / BP-1)).